Consider the following 426-residue polypeptide: Serine--tRNA ligase (426 aa).

The segment covering 1–15 (MIDVKDLSENPDKFR) has biased composition (basic and acidic residues). Residues 1 to 22 (MIDVKDLSENPDKFRASQRARG) form a disordered region. An L-serine-binding site is contributed by 228–230 (TSE). Residues 259-261 (RRE) and Val275 each bind ATP. Glu282 contacts L-serine. 346 to 349 (ELTS) contacts ATP. Thr386 contacts L-serine.

The protein belongs to the class-II aminoacyl-tRNA synthetase family. Type-1 seryl-tRNA synthetase subfamily. As to quaternary structure, homodimer. The tRNA molecule binds across the dimer.

It localises to the cytoplasm. It catalyses the reaction tRNA(Ser) + L-serine + ATP = L-seryl-tRNA(Ser) + AMP + diphosphate + H(+). The catalysed reaction is tRNA(Sec) + L-serine + ATP = L-seryl-tRNA(Sec) + AMP + diphosphate + H(+). Its pathway is aminoacyl-tRNA biosynthesis; selenocysteinyl-tRNA(Sec) biosynthesis; L-seryl-tRNA(Sec) from L-serine and tRNA(Sec): step 1/1. Functionally, catalyzes the attachment of serine to tRNA(Ser). Is also able to aminoacylate tRNA(Sec) with serine, to form the misacylated tRNA L-seryl-tRNA(Sec), which will be further converted into selenocysteinyl-tRNA(Sec). The sequence is that of Serine--tRNA ligase from Pseudarthrobacter chlorophenolicus (strain ATCC 700700 / DSM 12829 / CIP 107037 / JCM 12360 / KCTC 9906 / NCIMB 13794 / A6) (Arthrobacter chlorophenolicus).